A 50-amino-acid polypeptide reads, in one-letter code: MRETVHLGCEKCTRRNYHTTKNKKTTTEKLALKKYCKWCKEHTVHKEMKL.

It belongs to the bacterial ribosomal protein bL33 family.

The polypeptide is Large ribosomal subunit protein bL33 (Sulfurovum sp. (strain NBC37-1)).